A 102-amino-acid polypeptide reads, in one-letter code: Integration host factor subunit alpha (102 aa).

It belongs to the bacterial histone-like protein family. As to quaternary structure, heterodimer of an alpha and a beta chain.

Functionally, this protein is one of the two subunits of integration host factor, a specific DNA-binding protein that functions in genetic recombination as well as in transcriptional and translational control. The polypeptide is Integration host factor subunit alpha (Buchnera aphidicola subsp. Acyrthosiphon pisum (strain 5A)).